Here is a 129-residue protein sequence, read N- to C-terminus: Ig kappa chain V-IV region S107B (129 aa).

The N-terminal stretch at 1–22 (MDLQVQIIXFLLISVTVIMSRG) is a signal peptide. The tract at residues 23–45 (ENVLTQSPAIMAASLGQKVTMTC) is framework-1. Cys45 and Cys111 are disulfide-bonded. Positions 46–57 (SASSSVSSSYLH) are complementarity-determining-1. A framework-2 region spans residues 58 to 72 (WYQQKSGASPKPLIH). Residues 73–79 (RTSNLAS) are complementarity-determining-2. The interval 80-111 (GVPARFSGSGSGTSYSLTISSVEAEDDATYYC) is framework-3. Residues 112–118 (QQWSGYP) form a complementarity-determining-3 region. The segment at 119 to 128 (FGSGTKLEIK) is framework-4.

This is Ig kappa chain V-IV region S107B from Mus musculus (Mouse).